The primary structure comprises 81 residues: Exodeoxyribonuclease 7 small subunit (81 aa).

The protein belongs to the XseB family. As to quaternary structure, heterooligomer composed of large and small subunits.

The protein resides in the cytoplasm. It catalyses the reaction Exonucleolytic cleavage in either 5'- to 3'- or 3'- to 5'-direction to yield nucleoside 5'-phosphates.. In terms of biological role, bidirectionally degrades single-stranded DNA into large acid-insoluble oligonucleotides, which are then degraded further into small acid-soluble oligonucleotides. This Ruegeria sp. (strain TM1040) (Silicibacter sp.) protein is Exodeoxyribonuclease 7 small subunit.